The primary structure comprises 512 residues: Maturase K (512 aa).

The protein belongs to the intron maturase 2 family. MatK subfamily.

Its subcellular location is the plastid. It localises to the chloroplast. In terms of biological role, usually encoded in the trnK tRNA gene intron. Probably assists in splicing its own and other chloroplast group II introns. This chain is Maturase K, found in Filarum manserichense.